Reading from the N-terminus, the 227-residue chain is Enolase-phosphatase E1 (227 aa).

It belongs to the HAD-like hydrolase superfamily. MasA/MtnC family. In terms of assembly, monomer. It depends on Mg(2+) as a cofactor.

The enzyme catalyses 5-methylsulfanyl-2,3-dioxopentyl phosphate + H2O = 1,2-dihydroxy-5-(methylsulfanyl)pent-1-en-3-one + phosphate. It participates in amino-acid biosynthesis; L-methionine biosynthesis via salvage pathway; L-methionine from S-methyl-5-thio-alpha-D-ribose 1-phosphate: step 3/6. The protein operates within amino-acid biosynthesis; L-methionine biosynthesis via salvage pathway; L-methionine from S-methyl-5-thio-alpha-D-ribose 1-phosphate: step 4/6. Functionally, bifunctional enzyme that catalyzes the enolization of 2,3-diketo-5-methylthiopentyl-1-phosphate (DK-MTP-1-P) into the intermediate 2-hydroxy-3-keto-5-methylthiopentenyl-1-phosphate (HK-MTPenyl-1-P), which is then dephosphorylated to form the acireductone 1,2-dihydroxy-3-keto-5-methylthiopentene (DHK-MTPene). In Pseudomonas savastanoi pv. phaseolicola (strain 1448A / Race 6) (Pseudomonas syringae pv. phaseolicola (strain 1448A / Race 6)), this protein is Enolase-phosphatase E1.